Consider the following 75-residue polypeptide: Large ribosomal subunit protein bL31 (75 aa).

The protein belongs to the bacterial ribosomal protein bL31 family. Type A subfamily. Part of the 50S ribosomal subunit.

Binds the 23S rRNA. The polypeptide is Large ribosomal subunit protein bL31 (Chlorobium phaeovibrioides (strain DSM 265 / 1930) (Prosthecochloris vibrioformis (strain DSM 265))).